We begin with the raw amino-acid sequence, 123 residues long: Small ribosomal subunit protein uS12 (123 aa).

At Asp-89 the chain carries 3-methylthioaspartic acid. Positions 104–123 (TQGVKDRRQRRSKYGAKRPK) are disordered. Positions 110–123 (RRQRRSKYGAKRPK) are enriched in basic residues.

It belongs to the universal ribosomal protein uS12 family. Part of the 30S ribosomal subunit. Contacts proteins S8 and S17. May interact with IF1 in the 30S initiation complex.

Functionally, with S4 and S5 plays an important role in translational accuracy. Interacts with and stabilizes bases of the 16S rRNA that are involved in tRNA selection in the A site and with the mRNA backbone. Located at the interface of the 30S and 50S subunits, it traverses the body of the 30S subunit contacting proteins on the other side and probably holding the rRNA structure together. The combined cluster of proteins S8, S12 and S17 appears to hold together the shoulder and platform of the 30S subunit. The sequence is that of Small ribosomal subunit protein uS12 from Rhodospirillum rubrum (strain ATCC 11170 / ATH 1.1.1 / DSM 467 / LMG 4362 / NCIMB 8255 / S1).